Here is a 341-residue protein sequence, read N- to C-terminus: MATIKDVAKRANVSTTTVSHVINKTRFVAEETRNAVWAAIKELHYSPSAVARSLKVNHTKSIGLLATSSEAAYFAEIIEAVEKNCFQKGYTLILGNAWNNLEKQRAYLSMMAQKRVDGLLVMCSEYPEPLLSMLEEYRHIPMVVMDWGEAKADFTDTVIDNAFEGGYMAGRYLVERGHRDIGVIPGPLERNTGAGRLAGFMKAMEEALIKVPDNWIVQGDFEPESGYHAMQQILSQSHRPTAVFCGGDIMAMGALCAADEMGLRVPQDVSVIGYDNVRNARFFTPALTTIHQPKDSLGETAFNMLLDRIVNKREESQSIEVHPRLVERRSVADGPFRDYRR.

The HTH lacI-type domain maps to 2-56 (ATIKDVAKRANVSTTTVSHVINKTRFVAEETRNAVWAAIKELHYSPSAVARSLKV). The H-T-H motif DNA-binding region spans 4–23 (IKDVAKRANVSTTTVSHVIN). Residues 48-56 (SAVARSLKV) mediate DNA binding. 5 residues coordinate hypoxanthine: Tyr-73, Arg-190, Thr-192, Phe-221, and Asp-275.

As to quaternary structure, homodimer.

It participates in purine metabolism; purine nucleotide biosynthesis [regulation]. In terms of biological role, is the main repressor of the genes involved in the de novo synthesis of purine nucleotides, regulating purB, purC, purEK, purF, purHD, purL, purMN and guaBA expression. PurR is allosterically activated to bind its cognate DNA by binding the purine corepressors, hypoxanthine or guanine, thereby effecting transcription repression. The chain is HTH-type transcriptional repressor PurR from Salmonella arizonae (strain ATCC BAA-731 / CDC346-86 / RSK2980).